Here is a 374-residue protein sequence, read N- to C-terminus: Peptide chain release factor 2 (374 aa).

Position 250 is an N5-methylglutamine (Gln-250).

The protein belongs to the prokaryotic/mitochondrial release factor family. Post-translationally, methylated by PrmC. Methylation increases the termination efficiency of RF2.

It localises to the cytoplasm. In terms of biological role, peptide chain release factor 2 directs the termination of translation in response to the peptide chain termination codons UGA and UAA. The protein is Peptide chain release factor 2 of Beutenbergia cavernae (strain ATCC BAA-8 / DSM 12333 / CCUG 43141 / JCM 11478 / NBRC 16432 / NCIMB 13614 / HKI 0122).